The chain runs to 187 residues: Large ribosomal subunit protein eL18A (187 aa).

A phosphoserine mark is found at serine 16 and serine 64. A phosphothreonine mark is found at threonine 87, threonine 89, and threonine 134. Serine 136 carries the post-translational modification Phosphoserine. The residue at position 138 (threonine 138) is a Phosphothreonine.

It belongs to the eukaryotic ribosomal protein eL18 family. As to quaternary structure, component of the large ribosomal subunit (LSU). Mature yeast ribosomes consist of a small (40S) and a large (60S) subunit. The 40S small subunit contains 1 molecule of ribosomal RNA (18S rRNA) and at least 33 different proteins. The large 60S subunit contains 3 rRNA molecules (25S, 5.8S and 5S rRNA) and at least 46 different proteins. eL18 interacts with NAP1.

Its subcellular location is the cytoplasm. Component of the ribosome, a large ribonucleoprotein complex responsible for the synthesis of proteins in the cell. The small ribosomal subunit (SSU) binds messenger RNAs (mRNAs) and translates the encoded message by selecting cognate aminoacyl-transfer RNA (tRNA) molecules. The large subunit (LSU) contains the ribosomal catalytic site termed the peptidyl transferase center (PTC), which catalyzes the formation of peptide bonds, thereby polymerizing the amino acids delivered by tRNAs into a polypeptide chain. The nascent polypeptides leave the ribosome through a tunnel in the LSU and interact with protein factors that function in enzymatic processing, targeting, and the membrane insertion of nascent chains at the exit of the ribosomal tunnel. The protein is Large ribosomal subunit protein eL18A (rpl1801) of Schizosaccharomyces pombe (strain 972 / ATCC 24843) (Fission yeast).